We begin with the raw amino-acid sequence, 400 residues long: MTQFASPVLHSLLDTDAYKLHMQQAVFHHYYDVQVAAEFRCRGDDLLGIYADAIREQVDAMQHLRLQEDEFQWLSGLPFFKPDYLNWLREFRYNPAQVCVTNDNGKLNIRLTGPWREVIMWEVPLLAVISELVHHYRSPNAGVDQALDALESKLVDFTALTANLDMSRFYLMDFGTRRRFSREVQQAIVKRLQQESWFVGTSNYDLARRLALTPMGTQAHEWFQAHQQISPDLATSQRAALAAWLNEYPDQLGIALTDCITMDAFLRDFGIEFASRYQGLRHDSGDPVAWGEKAIAHYEKLGIDPLTKTLVFSDNLDLPKAVELYRHFASRVQLSFGIGTRLTCDIPQVKPLNIVIKLVECNGKPVAKLSDSPGKTICHDKAFVRALRKAFDLPQVRKAS.

A Phosphohistidine; by autocatalysis modification is found at histidine 220.

Belongs to the NAPRTase family. Post-translationally, transiently phosphorylated on a His residue during the reaction cycle. Phosphorylation strongly increases the affinity for substrates and increases the rate of nicotinate D-ribonucleotide production. Dephosphorylation regenerates the low-affinity form of the enzyme, leading to product release.

The catalysed reaction is nicotinate + 5-phospho-alpha-D-ribose 1-diphosphate + ATP + H2O = nicotinate beta-D-ribonucleotide + ADP + phosphate + diphosphate. It functions in the pathway cofactor biosynthesis; NAD(+) biosynthesis; nicotinate D-ribonucleotide from nicotinate: step 1/1. Catalyzes the synthesis of beta-nicotinate D-ribonucleotide from nicotinate and 5-phospho-D-ribose 1-phosphate at the expense of ATP. The polypeptide is Nicotinate phosphoribosyltransferase (Salmonella agona (strain SL483)).